The chain runs to 222 residues: 7-cyano-7-deazaguanine synthase (222 aa).

7-17 contacts ATP; the sequence is LSGGMDSAVAT. Zn(2+) contacts are provided by Cys188, Cys196, Cys199, and Cys202.

This sequence belongs to the QueC family. Requires Zn(2+) as cofactor.

The catalysed reaction is 7-carboxy-7-deazaguanine + NH4(+) + ATP = 7-cyano-7-deazaguanine + ADP + phosphate + H2O + H(+). It functions in the pathway purine metabolism; 7-cyano-7-deazaguanine biosynthesis. Functionally, catalyzes the ATP-dependent conversion of 7-carboxy-7-deazaguanine (CDG) to 7-cyano-7-deazaguanine (preQ(0)). The protein is 7-cyano-7-deazaguanine synthase of Methanothermobacter thermautotrophicus (strain ATCC 29096 / DSM 1053 / JCM 10044 / NBRC 100330 / Delta H) (Methanobacterium thermoautotrophicum).